Reading from the N-terminus, the 778-residue chain is Exo-beta-D-glucosaminidase (778 aa).

Substrate is bound by residues Tyr-55, Gly-104 to Glu-105, Asp-180 to Glu-181, Glu-308, Glu-349, and Tyr-381. Glu-181 acts as the Proton donor in catalysis. Glu-349 functions as the Nucleophile in the catalytic mechanism.

It belongs to the glycosyl hydrolase 35 family. As to quaternary structure, homodimer.

The protein localises to the cytoplasm. The enzyme catalyses beta-D-glucosaminyl-(1-&gt;4)-N-acetyl-D-glucosamine + H2O = D-glucosamine + N-acetyl-D-glucosamine. It functions in the pathway glycan degradation; chitin degradation. In terms of biological role, exo-type enzyme that specifically cleaves the non-reducing terminal glycosidic bond of chitooligosaccharides. Catalyzes the hydrolysis of GlcN-GlcNAc to glucosamine (GlcN) and N-acetylglucosamine (GlcNAc). Involved in chitin degradation. Can also hydrolyze chitosan and chitooligosaccharides of various chain lengths. This Pyrococcus horikoshii (strain ATCC 700860 / DSM 12428 / JCM 9974 / NBRC 100139 / OT-3) protein is Exo-beta-D-glucosaminidase.